The sequence spans 152 residues: Fibroblast growth factor 1 (152 aa).

Ala2 is modified (N-acetylalanine). Residues 2-15 constitute a propeptide that is removed on maturation; the sequence is AEGEITTFTALTEK. Residue Asn33 coordinates heparin. A heparin-binding region spans residues 127–143; it reads KKNGSCKRGPRTHYGQK.

Belongs to the heparin-binding growth factors family. As to quaternary structure, monomer. Homodimer. Interacts with FGFR1, FGFR2, FGFR3 and FGFR4. Affinity between fibroblast growth factors (FGFs) and their receptors is increased by heparan sulfate glycosaminoglycans that function as coreceptors. Found in a complex with FGFBP1, FGF1 and FGF2. Interacts with FGFBP1. Part of a Cu(2+)-dependent multiprotein aggregate containing FGF1, S100A13 and SYT1. Interacts with SYT1. Interacts with S100A13. Interacts with LRRC59. Interacts with CSNKA, CSNKB and FIBP. While binding with LRRC59, CSNKA and FIBP seem mutually exclusive, CSNKB and FIBP may cooperatively interact with FGF1. Forms a ternary complex with FGFR1 and ITGAV:ITGB3 and induces the recruitment of PTPN11 to the complex. In the nucleus, phosphorylated by PKC/PRKCD.

It is found in the secreted. Its subcellular location is the cytoplasm. The protein localises to the cell cortex. It localises to the cytosol. The protein resides in the nucleus. In terms of biological role, plays an important role in the regulation of cell survival, cell division, angiogenesis, cell differentiation and cell migration. Functions as a potent mitogen in vitro. Acts as a ligand for FGFR1 and integrins. Binds to FGFR1 in the presence of heparin leading to FGFR1 dimerization and activation via sequential autophosphorylation on tyrosine residues which act as docking sites for interacting proteins, leading to the activation of several signaling cascades. Binds to integrin ITGAV:ITGB3. Its binding to integrin, subsequent ternary complex formation with integrin and FGFR1, and the recruitment of PTPN11 to the complex are essential for FGF1 signaling. Induces the phosphorylation and activation of FGFR1, FRS2, MAPK3/ERK1, MAPK1/ERK2 and AKT1. Can induce angiogenesis. The sequence is that of Fibroblast growth factor 1 (FGF1) from Sus scrofa (Pig).